We begin with the raw amino-acid sequence, 603 residues long: uncharacterized protein (603 aa).

One can recognise a Ubiquitin-like domain in the interval 4–79 (YRIRVTTVDQ…VTFHLVIAVF (76 aa)). 3 disordered regions span residues 85 to 121 (TLPS…PEEL), 159 to 178 (SLPT…NSVS), and 206 to 348 (AQES…NQPF). Composition is skewed to polar residues over residues 94 to 117 (VPQS…TSLN) and 162 to 178 (THEQ…NSVS). A compositionally biased stretch (low complexity) spans 219–231 (SSSSAPLASDQSP). Polar residues predominate over residues 246-264 (LGSNSGLNPRSPNSFSSPL). Over residues 280–289 (SLSPLSNSSS) the composition is skewed to low complexity. The segment covering 290–314 (INQVHQNETHGSTISVPNPNLSQMG) has biased composition (polar residues). The span at 315-329 (PSHSSSVPSNLSPNP) shows a compositional bias: low complexity. The span at 330–348 (AQNENPSTTSIPSINNQPF) shows a compositional bias: polar residues. Residues 496–516 (ILLTSIMSVVFLLQTGALAPF) form a helical membrane-spanning segment. Positions 544–578 (TAQRVVEIPNETQTEDEQDGTNTPDNRADAEEREL) are disordered. T566 bears the Phosphothreonine mark. Residues 569-578 (NRADAEEREL) show a composition bias toward basic and acidic residues.

Its subcellular location is the endoplasmic reticulum membrane. This is an uncharacterized protein from Schizosaccharomyces pombe (strain 972 / ATCC 24843) (Fission yeast).